Reading from the N-terminus, the 447-residue chain is Citrate synthase-like protein oryE (447 aa).

Active-site residues include histidine 331 and aspartate 387.

It belongs to the citrate synthase family.

The protein operates within secondary metabolite biosynthesis. Citrate synthase-like protein; part of the gene cluster that mediates the biosynthesis of oryzines, natural products with an unusual maleidride backbone. The two subunits of the fungal fatty acid synthase oryfasA and oryfasB probably form octenoic acid. This fatty acid is most likely activated by the acyl-CoA ligase oryP to give octenyl-CoA before the citrate synthase-like protein oryE catalyzes condensation with oxaloacetate to form tricarboxylic acid. The next steps of the pathways are conjectural, but a favorite possible route has been proposed, beginning with decarboxylation and concomitant dehydration by the decarboxylase oryM, followed by tautomerization, which may lead to the production of a diene intermediate. Reduction of this diene intermediate could give the known metabolite piliformic acid. On the pathway to oryzine B and oryzine A, however, hydroxylation of the diene by the alpha-ketoglutarate-dependent dioxygenase oryG and lactonisation by the lactonohydrolases oryH or oryL could give oryzine B directly. Finally, enoyl reduction by the dehydrogenase oryD would then convert oryzine B into oryzine A. This is Citrate synthase-like protein oryE from Aspergillus oryzae (strain ATCC 42149 / RIB 40) (Yellow koji mold).